The sequence spans 20 residues: C-reactive protein (20 aa).

The region spanning 1–20 (SPVAASYRATAGLAGKALDF) is the Pentraxin (PTX) domain.

It belongs to the pentraxin family. As to quaternary structure, homodimer; disulfide-linked. It is not known if it assembles into a pentraxin (or pentaxin) structure. Pentraxins have a discoid arrangement of 5 non-covalently bound subunits. Post-translationally, glycosylated.

It localises to the secreted. Displays several functions associated with host defense: it promotes agglutination, bacterial capsular swelling, phagocytosis, and complement fixation through its calcium-dependent binding to phosphorylcholine. The sequence is that of C-reactive protein from Mustelus canis (Smooth dogfish).